A 323-amino-acid polypeptide reads, in one-letter code: E3 ubiquitin-protein ligase SIRP1 (323 aa).

An RING-type; atypical zinc finger spans residues 199 to 240 (CSVCLDDLEVGSQAKQMPCEHKFHSSCILPWLELHSSCPVCR). Disordered stretches follow at residues 248–280 (TKDLNEPSNIGRVEDSHEEVRADGPGNVSESSN) and 296–323 (REAQNAGGVSTDQQSPHTSGTNPNAGHS). Residues 259–269 (RVEDSHEEVRA) are compositionally biased toward basic and acidic residues.

It localises to the cytoplasm. It catalyses the reaction S-ubiquitinyl-[E2 ubiquitin-conjugating enzyme]-L-cysteine + [acceptor protein]-L-lysine = [E2 ubiquitin-conjugating enzyme]-L-cysteine + N(6)-ubiquitinyl-[acceptor protein]-L-lysine.. Its pathway is protein modification; protein ubiquitination. Functionally, possesses E3 ubiqutin-protein ligase activity in vitro. Acts as negative regulator of salinity stress tolerance mediated by the ubiquitin-proteasome degradation pathway. The protein is E3 ubiquitin-protein ligase SIRP1 of Oryza sativa subsp. japonica (Rice).